A 266-amino-acid chain; its full sequence is UPF0354 protein LMHCC_0955 (266 aa).

This sequence belongs to the UPF0354 family.

In Listeria monocytogenes serotype 4a (strain HCC23), this protein is UPF0354 protein LMHCC_0955.